A 547-amino-acid polypeptide reads, in one-letter code: Mercuric reductase (547 aa).

Residues 5–70 enclose the HMA domain; sequence APTELAITGM…AVVASGYGVH (66 aa). The a metal cation site is built by cysteine 16 and cysteine 19. Alanine 96 and threonine 121 together coordinate FAD. The cysteines at positions 122 and 127 are disulfide-linked. Positions 131, 197, 389, and 397 each coordinate FAD. The Hg(2+) site is built by cysteine 544 and cysteine 545.

This sequence belongs to the class-I pyridine nucleotide-disulfide oxidoreductase family. Homodimer. FAD serves as cofactor.

The catalysed reaction is Hg + NADP(+) + H(+) = Hg(2+) + NADPH. Resistance to Hg(2+) in bacteria appears to be governed by a specialized system which includes mercuric reductase. MerA protein is responsible for volatilizing mercury as Hg(0). In Acidithiobacillus ferrooxidans (Thiobacillus ferrooxidans), this protein is Mercuric reductase (merA).